The chain runs to 330 residues: Aspartate--ammonia ligase (330 aa).

The protein belongs to the class-II aminoacyl-tRNA synthetase family. AsnA subfamily.

The protein resides in the cytoplasm. It catalyses the reaction L-aspartate + NH4(+) + ATP = L-asparagine + AMP + diphosphate + H(+). It participates in amino-acid biosynthesis; L-asparagine biosynthesis; L-asparagine from L-aspartate (ammonia route): step 1/1. This chain is Aspartate--ammonia ligase, found in Escherichia fergusonii (strain ATCC 35469 / DSM 13698 / CCUG 18766 / IAM 14443 / JCM 21226 / LMG 7866 / NBRC 102419 / NCTC 12128 / CDC 0568-73).